A 315-amino-acid polypeptide reads, in one-letter code: Methionyl-tRNA formyltransferase (315 aa).

Position 113 to 116 (113 to 116 (SLLP)) interacts with (6S)-5,6,7,8-tetrahydrofolate.

It belongs to the Fmt family.

It carries out the reaction L-methionyl-tRNA(fMet) + (6R)-10-formyltetrahydrofolate = N-formyl-L-methionyl-tRNA(fMet) + (6S)-5,6,7,8-tetrahydrofolate + H(+). Functionally, attaches a formyl group to the free amino group of methionyl-tRNA(fMet). The formyl group appears to play a dual role in the initiator identity of N-formylmethionyl-tRNA by promoting its recognition by IF2 and preventing the misappropriation of this tRNA by the elongation apparatus. This is Methionyl-tRNA formyltransferase from Klebsiella pneumoniae (strain 342).